We begin with the raw amino-acid sequence, 224 residues long: UPF0173 metal-dependent hydrolase Ta0764 (224 aa).

It belongs to the UPF0173 family.

This is UPF0173 metal-dependent hydrolase Ta0764 from Thermoplasma acidophilum (strain ATCC 25905 / DSM 1728 / JCM 9062 / NBRC 15155 / AMRC-C165).